Reading from the N-terminus, the 185-residue chain is Ribosome-recycling factor (185 aa).

It belongs to the RRF family.

The protein localises to the cytoplasm. In terms of biological role, responsible for the release of ribosomes from messenger RNA at the termination of protein biosynthesis. May increase the efficiency of translation by recycling ribosomes from one round of translation to another. This is Ribosome-recycling factor from Halalkalibacterium halodurans (strain ATCC BAA-125 / DSM 18197 / FERM 7344 / JCM 9153 / C-125) (Bacillus halodurans).